We begin with the raw amino-acid sequence, 390 residues long: Isotocin receptor (390 aa).

The Extracellular segment spans residues 1–48; it reads MEEMFKEQDFWSFNESSRNSTVGNETFGGNQTVNPLKRNEEVAKVEVT. 4 N-linked (GlcNAc...) asparagine glycosylation sites follow: asparagine 14, asparagine 19, asparagine 24, and asparagine 30. Residues 49 to 69 form a helical membrane-spanning segment; it reads VLALVLFLALAGNLCVLIAIY. Residues 70–86 lie on the Cytoplasmic side of the membrane; the sequence is TAKHTQSRMYYLMKHLS. A helical membrane pass occupies residues 87 to 107; it reads IADLVVAVFQVLPQLIWDITF. Residues 108 to 124 are Extracellular-facing; sequence RFYGPDFLCRLVKYLQT. The cysteines at positions 116 and 191 are disulfide-linked. The chain crosses the membrane as a helical span at residues 125–145; sequence VGMFASTYMLVLMSIDRCIAI. Over 146 to 160 the chain is Cytoplasmic; the sequence is CQPLRSLHKRKDRCY. The chain crosses the membrane as a helical span at residues 161 to 181; it reads VIVSWALSLVFSVPQVYIFSL. Over 182-206 the chain is Extracellular; that stretch reads REIGNGVYDCWGDFVQPWGAKAYIT. The chain crosses the membrane as a helical span at residues 207-227; that stretch reads WISLTIYIIPVAILGGCYGLI. The Cytoplasmic segment spans residues 228–276; it reads SFKIWQNFKRKTKKDQCITLTTAASKANALARVSSVKLVSKAKITTVKM. A helical membrane pass occupies residues 277–297; the sequence is TFVIVLAYIVCWTPFFFVQMW. Residues 298–311 are Extracellular-facing; it reads SAWDPEAPREAMPF. The chain crosses the membrane as a helical span at residues 312–332; that stretch reads IISMLLASLNSCCNPWIYMFF. Over 333–390 the chain is Cytoplasmic; that stretch reads AGHLFHDLKQSLLCCSTLYLKSSQCRCDQEHDSRKSNCSTYVIKSTSSQRSITQSSIT.

It belongs to the G-protein coupled receptor 1 family. Vasopressin/oxytocin receptor subfamily. As to expression, expressed in brain, intestine, bladder, skeletal muscle, lateral line, gills and kidney.

The protein localises to the cell membrane. In terms of biological role, binds to isotocin. Can also be activated by vasotocin, mesotocin, oxytocin and Arg-vasopressin, although these have lower potencies than isotocin. Produces an induction of membrane chloride currents indicating that it is coupled to the inositol phosphate/calcium pathway. This is Isotocin receptor from Catostomus commersonii (White sucker).